We begin with the raw amino-acid sequence, 291 residues long: Elongation factor Ts (291 aa).

The involved in Mg(2+) ion dislocation from EF-Tu stretch occupies residues 79-82; the sequence is TDFV.

The protein belongs to the EF-Ts family.

It localises to the cytoplasm. Associates with the EF-Tu.GDP complex and induces the exchange of GDP to GTP. It remains bound to the aminoacyl-tRNA.EF-Tu.GTP complex up to the GTP hydrolysis stage on the ribosome. The sequence is that of Elongation factor Ts from Ruegeria pomeroyi (strain ATCC 700808 / DSM 15171 / DSS-3) (Silicibacter pomeroyi).